Reading from the N-terminus, the 1407-residue chain is Probable phosphoribosylformylglycinamidine synthase, chloroplastic/mitochondrial (1407 aa).

The N-terminal 53 residues, 1 to 53 (MNTSQATRAALFLNGSNRQAMLLQRSSMSQLWGSVRMRTSRLSLNRTKAVSLR), are a transit peptide targeting the chloroplast and mitochondrion. ATP-binding positions include 407-418 (GAETGAGGRIRD), 487-489 (QGY), and Ala-786. Asp-787, Glu-826, Asn-830, and Asp-989 together coordinate Mg(2+). Ser-991 lines the ATP pocket. The region spanning 1141-1381 (KVAVIREEGS…LMWQFPWYPT (241 aa)) is the Glutamine amidotransferase type-1 domain. The active-site Nucleophile is the Cys-1235. Catalysis depends on residues His-1366 and Glu-1368.

The protein in the N-terminal section; belongs to the FGAMS family.

The protein resides in the plastid. Its subcellular location is the chloroplast. The protein localises to the mitochondrion. The catalysed reaction is N(2)-formyl-N(1)-(5-phospho-beta-D-ribosyl)glycinamide + L-glutamine + ATP + H2O = 2-formamido-N(1)-(5-O-phospho-beta-D-ribosyl)acetamidine + L-glutamate + ADP + phosphate + H(+). The protein operates within purine metabolism; IMP biosynthesis via de novo pathway; 5-amino-1-(5-phospho-D-ribosyl)imidazole from N(2)-formyl-N(1)-(5-phospho-D-ribosyl)glycinamide: step 1/2. Essential to the male gametophyte development. Phosphoribosylformylglycinamidine synthase involved in the purines biosynthetic pathway. Catalyzes the ATP-dependent conversion of formylglycinamide ribonucleotide (FGAR) and glutamine to yield formylglycinamidine ribonucleotide (FGAM) and glutamate. The polypeptide is Probable phosphoribosylformylglycinamidine synthase, chloroplastic/mitochondrial (Arabidopsis thaliana (Mouse-ear cress)).